The chain runs to 874 residues: Alanine--tRNA ligase (874 aa).

Zn(2+)-binding residues include histidine 563, histidine 567, cysteine 665, and histidine 669.

The protein belongs to the class-II aminoacyl-tRNA synthetase family. Zn(2+) is required as a cofactor.

The protein resides in the cytoplasm. The catalysed reaction is tRNA(Ala) + L-alanine + ATP = L-alanyl-tRNA(Ala) + AMP + diphosphate. Its function is as follows. Catalyzes the attachment of alanine to tRNA(Ala) in a two-step reaction: alanine is first activated by ATP to form Ala-AMP and then transferred to the acceptor end of tRNA(Ala). Also edits incorrectly charged Ser-tRNA(Ala) and Gly-tRNA(Ala) via its editing domain. The chain is Alanine--tRNA ligase from Haemophilus influenzae (strain 86-028NP).